We begin with the raw amino-acid sequence, 349 residues long: Biotin synthase (349 aa).

One can recognise a Radical SAM core domain in the interval 70-295; that stretch reads PEVEVEGIIS…RTMLRFAGGR (226 aa). The [4Fe-4S] cluster site is built by cysteine 85, cysteine 89, and cysteine 92. The [2Fe-2S] cluster site is built by cysteine 128, cysteine 161, cysteine 220, and arginine 290.

It belongs to the radical SAM superfamily. Biotin synthase family. Homodimer. The cofactor is [4Fe-4S] cluster. [2Fe-2S] cluster is required as a cofactor.

It carries out the reaction (4R,5S)-dethiobiotin + (sulfur carrier)-SH + 2 reduced [2Fe-2S]-[ferredoxin] + 2 S-adenosyl-L-methionine = (sulfur carrier)-H + biotin + 2 5'-deoxyadenosine + 2 L-methionine + 2 oxidized [2Fe-2S]-[ferredoxin]. The protein operates within cofactor biosynthesis; biotin biosynthesis; biotin from 7,8-diaminononanoate: step 2/2. Catalyzes the conversion of dethiobiotin (DTB) to biotin by the insertion of a sulfur atom into dethiobiotin via a radical-based mechanism. The protein is Biotin synthase of Mycobacterium bovis (strain ATCC BAA-935 / AF2122/97).